Reading from the N-terminus, the 497-residue chain is 3-octaprenyl-4-hydroxybenzoate carboxy-lyase (497 aa).

N172 contributes to the Mn(2+) binding site. Residues 175–177, 189–191, and 194–195 each bind prenylated FMN; these read IYR, RWL, and RG. E238 is a Mn(2+) binding site. D287 functions as the Proton donor in the catalytic mechanism.

The protein belongs to the UbiD family. As to quaternary structure, homohexamer. The cofactor is prenylated FMN. Mn(2+) is required as a cofactor.

Its subcellular location is the cell membrane. It catalyses the reaction a 4-hydroxy-3-(all-trans-polyprenyl)benzoate + H(+) = a 2-(all-trans-polyprenyl)phenol + CO2. It functions in the pathway cofactor biosynthesis; ubiquinone biosynthesis. In terms of biological role, catalyzes the decarboxylation of 3-octaprenyl-4-hydroxy benzoate to 2-octaprenylphenol, an intermediate step in ubiquinone biosynthesis. The chain is 3-octaprenyl-4-hydroxybenzoate carboxy-lyase from Enterobacter sp. (strain 638).